Here is a 358-residue protein sequence, read N- to C-terminus: UDP-N-acetylglucosamine--N-acetylmuramyl-(pentapeptide) pyrophosphoryl-undecaprenol N-acetylglucosamine transferase (358 aa).

Residues 11–13, Asn-120, Arg-161, Ser-188, and Gln-282 contribute to the UDP-N-acetyl-alpha-D-glucosamine site; that span reads TGG.

This sequence belongs to the glycosyltransferase 28 family. MurG subfamily.

It localises to the cell inner membrane. It catalyses the reaction di-trans,octa-cis-undecaprenyl diphospho-N-acetyl-alpha-D-muramoyl-L-alanyl-D-glutamyl-meso-2,6-diaminopimeloyl-D-alanyl-D-alanine + UDP-N-acetyl-alpha-D-glucosamine = di-trans,octa-cis-undecaprenyl diphospho-[N-acetyl-alpha-D-glucosaminyl-(1-&gt;4)]-N-acetyl-alpha-D-muramoyl-L-alanyl-D-glutamyl-meso-2,6-diaminopimeloyl-D-alanyl-D-alanine + UDP + H(+). It participates in cell wall biogenesis; peptidoglycan biosynthesis. Functionally, cell wall formation. Catalyzes the transfer of a GlcNAc subunit on undecaprenyl-pyrophosphoryl-MurNAc-pentapeptide (lipid intermediate I) to form undecaprenyl-pyrophosphoryl-MurNAc-(pentapeptide)GlcNAc (lipid intermediate II). The protein is UDP-N-acetylglucosamine--N-acetylmuramyl-(pentapeptide) pyrophosphoryl-undecaprenol N-acetylglucosamine transferase of Parasynechococcus marenigrum (strain WH8102).